Reading from the N-terminus, the 60-residue chain is Mastoparan-VB2 (60 aa).

The N-terminal stretch at 1 to 27 (MKNTILLLFTAFIFLMGFFGMSADALA) is a signal peptide. AXPX repeat units lie at residues 27–30 (ADPK), 31–34 (ADPL), 35–38 (AGPF), and 41–44 (ADPD). The propeptide occupies 28–45 (DPKADPLAGPFPDADPDP). Leu59 is modified (leucine amide).

The protein belongs to the MCD family. Mastoparan subfamily. In terms of tissue distribution, expressed by the venom gland.

It localises to the secreted. The protein localises to the target cell membrane. Antimicrobial peptide. Shows activity against both Gram-positive and -negative bacteria, as well against fungi. Also promotes moderate mast cell degranulation. Does not show hemolytic activity on rabbit and human erythrocytes. Its mast cell degranulation activity may be related to the activation of G-protein coupled receptors in mast cells as well as interaction with other proteins located in cell endosomal membranes in the mast cells. The chain is Mastoparan-VB2 from Vespa bicolor (Black shield wasp).